The chain runs to 300 residues: Aspartate carbamoyltransferase catalytic subunit (300 aa).

The carbamoyl phosphate site is built by Arg50 and Thr51. Lys78 is an L-aspartate binding site. Carbamoyl phosphate-binding residues include Arg100, His127, and Gln130. Arg160 and Arg210 together coordinate L-aspartate. Residues Ala253 and Pro254 each coordinate carbamoyl phosphate.

The protein belongs to the aspartate/ornithine carbamoyltransferase superfamily. ATCase family. Heterododecamer (2C3:3R2) of six catalytic PyrB chains organized as two trimers (C3), and six regulatory PyrI chains organized as three dimers (R2).

The catalysed reaction is carbamoyl phosphate + L-aspartate = N-carbamoyl-L-aspartate + phosphate + H(+). It functions in the pathway pyrimidine metabolism; UMP biosynthesis via de novo pathway; (S)-dihydroorotate from bicarbonate: step 2/3. In terms of biological role, catalyzes the condensation of carbamoyl phosphate and aspartate to form carbamoyl aspartate and inorganic phosphate, the committed step in the de novo pyrimidine nucleotide biosynthesis pathway. This Staphylococcus saprophyticus subsp. saprophyticus (strain ATCC 15305 / DSM 20229 / NCIMB 8711 / NCTC 7292 / S-41) protein is Aspartate carbamoyltransferase catalytic subunit.